Here is a 502-residue protein sequence, read N- to C-terminus: 9-beta-pimara-7,15-diene oxidase (502 aa).

2 helical membrane passes run 4-26 and 106-128; these read INSE…ALLT and LLVS…GAYW. C438 lines the heme pocket.

It belongs to the cytochrome P450 family. It depends on heme as a cofactor.

The protein localises to the membrane. It carries out the reaction 9beta-pimara-7,15-diene + 3 reduced [NADPH--hemoprotein reductase] + 3 O2 = 9beta-pimara-7,15-dien-19-oate + 3 oxidized [NADPH--hemoprotein reductase] + 4 H2O + 4 H(+). Involved in momilactone phytoalexins biosynthesis; acts as a multifunctional diterpene oxidase. Participates in the biosynthetic steps between 9-beta-pimara-7,15-diene and 3-beta-hydroxy-9-beta-pimara-7,15-dien-19,6-beta-olide. Also catalyzes consecutive oxidations at C19 of syn-stemod-13(17)-ene. The protein is 9-beta-pimara-7,15-diene oxidase (CYP99A3) of Oryza sativa subsp. japonica (Rice).